We begin with the raw amino-acid sequence, 208 residues long: RNA chaperone ProQ (208 aa).

2 stretches are compositionally biased toward basic and acidic residues: residues alanine 99–lysine 115 and proline 126–alanine 135. Residues alanine 99–lysine 149 form a disordered region. Over residues alanine 137 to lysine 149 the composition is skewed to basic residues.

The protein belongs to the ProQ family.

The protein localises to the cytoplasm. Functionally, RNA chaperone with significant RNA binding, RNA strand exchange and RNA duplexing activities. The sequence is that of RNA chaperone ProQ from Idiomarina loihiensis (strain ATCC BAA-735 / DSM 15497 / L2-TR).